A 335-amino-acid chain; its full sequence is 2-acylglycerol O-acyltransferase 1 (335 aa).

2 consecutive transmembrane segments (helical) span residues tryptophan 24–leucine 44 and tyrosine 104–threonine 124. An N-linked (GlcNAc...) asparagine glycan is attached at asparagine 180.

Belongs to the diacylglycerol acyltransferase family. As to expression, expressed at high level in kidney and stomach. Expressed at lower level in brown and white adipose tissue, uterus and liver. Not detected in small intestine.

Its subcellular location is the endoplasmic reticulum membrane. It catalyses the reaction a 2-acylglycerol + an acyl-CoA = a 1,2-diacylglycerol + CoA. The catalysed reaction is 2-(9Z-octadecenoyl)-glycerol + butanoyl-CoA = 1-butanoyl-2-(9Z-octadecenoyl)-glycerol + CoA. The enzyme catalyses 2-(9Z-octadecenoyl)-glycerol + octanoyl-CoA = 1-octanoyl-2-(9Z-octadecenoyl)-glycerol + CoA. It carries out the reaction 2-(9Z-octadecenoyl)-glycerol + dodecanoyl-CoA = 1-dodecanoyl-2-(9Z-octadecenoyl)-glycerol + CoA. It catalyses the reaction 2-(9Z-octadecenoyl)-glycerol + tetradecanoyl-CoA = 1-tetradecanoyl-2-(9Z-octadecenoyl)-glycerol + CoA. The catalysed reaction is 2-(9Z-octadecenoyl)-glycerol + hexadecanoyl-CoA = 1-hexadecanoyl-2-(9Z-octadecenoyl)-glycerol + CoA. The enzyme catalyses 2-(9Z-octadecenoyl)-glycerol + octadecanoyl-CoA = 1-octadecanoyl-2-(9Z-octadecenoyl)-glycerol + CoA. It carries out the reaction eicosanoyl-CoA + 2-(9Z-octadecenoyl)-glycerol = 1-eicosanoyl-2-(9Z-octadecenoyl)-glycerol + CoA. It catalyses the reaction 2-(9Z-octadecenoyl)-glycerol + (9Z)-octadecenoyl-CoA = 1,2-di-(9Z-octadecenoyl)-glycerol + CoA. The catalysed reaction is 2-(9Z-octadecenoyl)-glycerol + (9Z,12Z)-octadecadienoyl-CoA = 1-(9Z,12Z-octadecadienoyl)-2-(9Z-octadecenoyl)-glycerol + CoA. The enzyme catalyses 2-(9Z-octadecenoyl)-glycerol + (5Z,8Z,11Z,14Z)-eicosatetraenoyl-CoA = 1-(5Z,8Z,11Z,14Z-eicosatetraenoyl)-2-(9Z-octadecenoyl)-glycerol + CoA. It carries out the reaction a 2-acylglycerol + an acyl-CoA = a 1,2-diacyl-sn-glycerol + CoA. It catalyses the reaction a 2-acylglycerol + an acyl-CoA = a 2,3-diacyl-sn-glycerol + CoA. The catalysed reaction is a 1-acylglycerol + an acyl-CoA = a 1,2-diacylglycerol + CoA. The enzyme catalyses 1-dodecanoylglycerol + (9Z)-octadecenoyl-CoA = 1-dodecanoyl-2-(9Z-octadecenoyl)-glycerol + CoA. It carries out the reaction 1-tetradecanoylglycerol + (9Z)-octadecenoyl-CoA = 1-tetradecanoyl-2-(9Z-octadecenoyl)-glycerol + CoA. It catalyses the reaction 1-hexadecanoylglycerol + (9Z)-octadecenoyl-CoA = 1-hexadecanoyl-2-(9Z-octadecenoyl)-glycerol + CoA. The catalysed reaction is 1-(9Z-octadecenoyl)-glycerol + (9Z)-octadecenoyl-CoA = 1,2-di-(9Z-octadecenoyl)-glycerol + CoA. The enzyme catalyses 1-(9Z,12Z-octadecadienoyl)-glycerol + (9Z)-octadecenoyl-CoA = 1-(9Z,12Z-octadecadienoyl)-2-(9Z-octadecenoyl)-glycerol + CoA. It carries out the reaction 1-(9Z,12Z,15Z-octadecatrienoyl)-glycerol + (9Z)-octadecenoyl-CoA = 1-(9Z,12Z,15Z-octadecatrienoyl)-2-(9Z-octadecenoyl)-glycerol + CoA. It catalyses the reaction 1-(5Z,8Z,11Z,14Z-eicosatetraenoyl)-glycerol + (9Z)-octadecenoyl-CoA = 1-(5Z,8Z,11Z,14Z-eicosatetraenoyl)-2-(9Z-octadecenoyl)-glycerol + CoA. The catalysed reaction is a 1-acylglycerol + an acyl-CoA = a 1,3-diacylglycerol + CoA. The enzyme catalyses 1-dodecanoylglycerol + (9Z)-octadecenoyl-CoA = 1-dodecanoyl-3-(9Z-octadecenoyl)-glycerol + CoA. It carries out the reaction 1-hexadecanoylglycerol + (9Z)-octadecenoyl-CoA = 1-(9Z-octadecenoyl)-3-hexadecanoylglycerol + CoA. It catalyses the reaction 1-octadecanoylglycerol + (9Z)-octadecenoyl-CoA = 1-octadecanoyl-3-(9Z-octadecenoyl)-glycerol + CoA. The catalysed reaction is 1-(9Z-octadecenoyl)-sn-glycerol + (9Z)-octadecenoyl-CoA = 1,3-di-(9Z-octadecenoyl)-glycerol + CoA. The enzyme catalyses 1-(9Z,12Z-octadecadienoyl)-glycerol + (9Z)-octadecenoyl-CoA = 1-(9Z-octadecenoyl)-3-(9Z,12Z-octadecadienoyl)-glycerol + CoA. It carries out the reaction 1-(9Z,12Z,15Z-octadecatrienoyl)-glycerol + (9Z)-octadecenoyl-CoA = 1-(9Z,12Z,15Z-octadecatrienoyl)-3-(9Z-octadecenoyl)-glycerol + CoA. It catalyses the reaction a 1-acyl-sn-glycerol + an acyl-CoA = a 1,3-diacyl-sn-glycerol + CoA. The catalysed reaction is a 3-acyl-sn-glycerol + an acyl-CoA = a 1,3-diacyl-sn-glycerol + CoA. The enzyme catalyses 3-octadecanoyl-sn-glycerol + (9Z)-octadecenoyl-CoA = 1-(9Z-octadecenoyl)-3-octadecanoyl-sn-glycerol + CoA. It participates in glycerolipid metabolism; triacylglycerol biosynthesis. Involved in glycerolipid synthesis and lipid metabolism. Catalyzes the formation of diacylglycerol, the precursor of triacylglycerol, by transferring the acyl chain of a fatty acyl-CoA to a monoacylglycerol, mainly at the sn-1 or sn-3 positions. It uses both sn-2-monoacylglycerol (2-acylglycerol) and sn-1-monoacylglycerol (1-acyl-sn-glycerol) equally well as substrates, and uses sn-3-monoacylglycerol (3-acyl-sn-glycerol) with lower efficiency. Probably not involved in absorption of dietary fat in the small intestine. The protein is 2-acylglycerol O-acyltransferase 1 of Mus musculus (Mouse).